We begin with the raw amino-acid sequence, 327 residues long: MFNDIPVFDYEDIQLIPNKCIITSRSQADTSVTLGKYQFKLPVIPANMQTIIDETIAERLAKEGYFYIMHRFDEDSRKPFIKRMHEQGLIASISVGVKACEYEFVTSLKEDAPEFITIDIAHGHANSVIDMIKHIKTELPETFVIAGNVGTPEAVRELENAGADATKVGIGPGKVCITKVKTGFGTGGWQLAALRWCAKAARKPIIADGGIRTHGDIAKSIRFGASMVMIGSLFAGHIESPGKTVEVDGETFKEYYGSASEYQKGEHKNVEGKKILLPTKGHLSDTLTEMQQDLQSSISYAGGKDLDSLRHVDYVIVKNSIWNGDSI.

Cys-176 functions as the Thioimidate intermediate in the catalytic mechanism. Residue 205–228 (IIADGGIRTHGDIAKSIRFGASMV) participates in NADP(+) binding.

Belongs to the IMPDH/GMPR family. GuaC type 2 subfamily.

The enzyme catalyses IMP + NH4(+) + NADP(+) = GMP + NADPH + 2 H(+). Functionally, catalyzes the irreversible NADPH-dependent deamination of GMP to IMP. It functions in the conversion of nucleobase, nucleoside and nucleotide derivatives of G to A nucleotides, and in maintaining the intracellular balance of A and G nucleotides. The sequence is that of GMP reductase from Streptococcus pyogenes serotype M28 (strain MGAS6180).